A 338-amino-acid polypeptide reads, in one-letter code: UDP-3-O-acylglucosamine N-acyltransferase (338 aa).

The active-site Proton acceptor is the His-239.

The protein belongs to the transferase hexapeptide repeat family. LpxD subfamily. As to quaternary structure, homotrimer.

It catalyses the reaction a UDP-3-O-[(3R)-3-hydroxyacyl]-alpha-D-glucosamine + a (3R)-hydroxyacyl-[ACP] = a UDP-2-N,3-O-bis[(3R)-3-hydroxyacyl]-alpha-D-glucosamine + holo-[ACP] + H(+). The protein operates within bacterial outer membrane biogenesis; LPS lipid A biosynthesis. In terms of biological role, catalyzes the N-acylation of UDP-3-O-acylglucosamine using 3-hydroxyacyl-ACP as the acyl donor. Is involved in the biosynthesis of lipid A, a phosphorylated glycolipid that anchors the lipopolysaccharide to the outer membrane of the cell. This is UDP-3-O-acylglucosamine N-acyltransferase from Xylella fastidiosa (strain M12).